The following is an 872-amino-acid chain: Valine--tRNA ligase (872 aa).

Positions 45 to 55 match the 'HIGH' region motif; that stretch reads PYPTGNLHIGN. Residues 524–528 carry the 'KMSKS' region motif; the sequence is KMSKS. K527 is an ATP binding site.

The protein belongs to the class-I aminoacyl-tRNA synthetase family. ValS type 2 subfamily.

It localises to the cytoplasm. It carries out the reaction tRNA(Val) + L-valine + ATP = L-valyl-tRNA(Val) + AMP + diphosphate. Functionally, catalyzes the attachment of valine to tRNA(Val). As ValRS can inadvertently accommodate and process structurally similar amino acids such as threonine, to avoid such errors, it has a 'posttransfer' editing activity that hydrolyzes mischarged Thr-tRNA(Val) in a tRNA-dependent manner. The chain is Valine--tRNA ligase from Natronomonas pharaonis (strain ATCC 35678 / DSM 2160 / CIP 103997 / JCM 8858 / NBRC 14720 / NCIMB 2260 / Gabara) (Halobacterium pharaonis).